We begin with the raw amino-acid sequence, 163 residues long: Auxin-responsive protein IAA5 (163 aa).

The EAR-like (transcriptional repression) signature appears at 15–19 (LRLGL). Residues 74–160 (SSYVKVSVDG…KRLRIMKRSC (87 aa)) form the PB1 domain.

The protein belongs to the Aux/IAA family. Homodimers and heterodimers. In terms of tissue distribution, highly expressed in stems and flowers.

The protein localises to the nucleus. In terms of biological role, aux/IAA proteins are short-lived transcriptional factors that function as repressors of early auxin response genes at low auxin concentrations. Repression is thought to result from the interaction with auxin response factors (ARFs), proteins that bind to the auxin-responsive promoter element (AuxRE). Formation of heterodimers with ARF proteins may alter their ability to modulate early auxin response genes expression. The sequence is that of Auxin-responsive protein IAA5 (IAA5) from Arabidopsis thaliana (Mouse-ear cress).